Here is a 517-residue protein sequence, read N- to C-terminus: Pentatricopeptide repeat-containing protein At1g13040, mitochondrial (517 aa).

A mitochondrion-targeting transit peptide spans 1–57 (MHQTLGAVRLAYRSRIANLVKSGMIDNAVQVFDEMRHSSYRVFSFDYNRFIGVLVRE). PPR repeat units follow at residues 8–42 (VRLA…SYRV), 43–77 (FSFD…GFSL), 78–112 (IPFT…GFIP), 113–147 (DIWA…GREP), 148–182 (DVVS…GVSP), 183–218 (DNKA…RVKL), 219–253 (STVV…GCEP), 254–288 (DLVT…GIQL), 289–320 (DAYS…MEPR), 324–358 (DVVS…GMVM), 359–393 (NVVT…GLSP), 394–428 (DRIF…EITP), 429–463 (DAIS…ECCP), and 464–498 (DELT…GFTL).

This sequence belongs to the PPR family. P subfamily.

The protein localises to the mitochondrion. The sequence is that of Pentatricopeptide repeat-containing protein At1g13040, mitochondrial from Arabidopsis thaliana (Mouse-ear cress).